A 271-amino-acid polypeptide reads, in one-letter code: Shikimate dehydrogenase (NADP(+)) (271 aa).

Residues 14-16 and threonine 61 contribute to the shikimate site; that span reads SLS. Lysine 65 (proton acceptor) is an active-site residue. Positions 86 and 101 each coordinate shikimate. NADP(+) contacts are provided by residues 125–129 and isoleucine 212; that span reads GAGGA. Tyrosine 214 contributes to the shikimate binding site. Glycine 235 serves as a coordination point for NADP(+).

This sequence belongs to the shikimate dehydrogenase family. As to quaternary structure, homodimer.

The enzyme catalyses shikimate + NADP(+) = 3-dehydroshikimate + NADPH + H(+). Its pathway is metabolic intermediate biosynthesis; chorismate biosynthesis; chorismate from D-erythrose 4-phosphate and phosphoenolpyruvate: step 4/7. Involved in the biosynthesis of the chorismate, which leads to the biosynthesis of aromatic amino acids. Catalyzes the reversible NADPH linked reduction of 3-dehydroshikimate (DHSA) to yield shikimate (SA). This is Shikimate dehydrogenase (NADP(+)) from Clostridium perfringens (strain 13 / Type A).